Here is a 181-residue protein sequence, read N- to C-terminus: ADP-ribosylation factor 2 (181 aa).

Gly-2 carries the N-myristoyl glycine lipid modification. GTP is bound by residues 24 to 31 (GLDAAGKT), 67 to 71 (DVGGQ), and 126 to 129 (NKQD).

It belongs to the small GTPase superfamily. Arf family.

The protein localises to the golgi apparatus. In terms of biological role, GTP-binding protein that functions as an allosteric activator of the cholera toxin catalytic subunit, an ADP-ribosyltransferase. Involved in protein trafficking; may modulate vesicle budding and uncoating within the Golgi apparatus. In Bos taurus (Bovine), this protein is ADP-ribosylation factor 2 (ARF2).